A 614-amino-acid chain; its full sequence is Cathepsin F (614 aa).

The signal sequence occupies residues 1-20; it reads MRLFAAATVALVLLLGQAAG. The propeptide at 21 to 393 is activation peptide; that stretch reads EELAEERAGQ…AAVVPAYHGE (373 aa). A disordered region spans residues 25 to 50; it reads EERAGQAQGDAESTESSETTTDQAVS. Positions 29–45 are enriched in low complexity; the sequence is GQAQGDAESTESSETTT. Asn-151 is a glycosylation site (N-linked (GlcNAc...) asparagine). Disulfide bonds link Cys-415/Cys-456 and Cys-449/Cys-489. Cys-418 is an active-site residue. 2 N-linked (GlcNAc...) asparagine glycosylation sites follow: Asn-492 and Asn-510. A disulfide bond links Cys-548 and Cys-602. Residues His-555 and Asn-581 contribute to the active site.

Belongs to the peptidase C1 family.

It carries out the reaction The recombinant enzyme cleaves synthetic substrates with Phe and Leu (better than Val) in P2, with high specificity constant (kcat/Km) comparable to that of cathepsin L.. In terms of biological role, may have a role in autophagic cell death. This Drosophila melanogaster (Fruit fly) protein is Cathepsin F.